A 276-amino-acid polypeptide reads, in one-letter code: Extracellular metalloprotease VDBG_07883 (276 aa).

An N-terminal signal peptide occupies residues Met1–Ala17. Asn70 and Asn102 each carry an N-linked (GlcNAc...) asparagine glycan. His191 contributes to the Zn(2+) binding site. Glu192 is an active-site residue. Residue His195 coordinates Zn(2+). Asn222 is a glycosylation site (N-linked (GlcNAc...) asparagine). A disulfide bridge connects residues Cys227 and Cys254.

This sequence belongs to the peptidase M43B family.

The protein resides in the secreted. Functionally, secreted metalloproteinase that allows assimilation of proteinaceous substrates. The sequence is that of Extracellular metalloprotease VDBG_07883 from Verticillium alfalfae (strain VaMs.102 / ATCC MYA-4576 / FGSC 10136) (Verticillium wilt of alfalfa).